The chain runs to 100 residues: NADH-quinone oxidoreductase subunit K (100 aa).

The next 3 membrane-spanning stretches (helical) occupy residues leucine 4–valine 24, isoleucine 28–valine 48, and isoleucine 60–leucine 80.

It belongs to the complex I subunit 4L family. NDH-1 is composed of 13 different subunits. Subunits NuoA, H, J, K, L, M, N constitute the membrane sector of the complex.

The protein localises to the cell membrane. It catalyses the reaction a quinone + NADH + 5 H(+)(in) = a quinol + NAD(+) + 4 H(+)(out). In terms of biological role, NDH-1 shuttles electrons from NADH, via FMN and iron-sulfur (Fe-S) centers, to quinones in the respiratory chain. The immediate electron acceptor for the enzyme in this species is believed to be ubiquinone. Couples the redox reaction to proton translocation (for every two electrons transferred, four hydrogen ions are translocated across the cytoplasmic membrane), and thus conserves the redox energy in a proton gradient. This chain is NADH-quinone oxidoreductase subunit K, found in Buchnera aphidicola subsp. Schizaphis graminum (strain Sg).